We begin with the raw amino-acid sequence, 185 residues long: A-type ATP synthase subunit E (185 aa).

This sequence belongs to the V-ATPase E subunit family. Has multiple subunits with at least A(3), B(3), C, D, E, F, H, I and proteolipid K(x).

It is found in the cell membrane. Component of the A-type ATP synthase that produces ATP from ADP in the presence of a proton gradient across the membrane. This chain is A-type ATP synthase subunit E, found in Thermoplasma acidophilum (strain ATCC 25905 / DSM 1728 / JCM 9062 / NBRC 15155 / AMRC-C165).